The chain runs to 185 residues: Large ribosomal subunit protein uL16m (185 aa).

This sequence belongs to the universal ribosomal protein uL16 family.

It is found in the mitochondrion. The sequence is that of Large ribosomal subunit protein uL16m (RPL16) from Zea mays (Maize).